A 148-amino-acid chain; its full sequence is uncharacterized protein (148 aa).

This is an uncharacterized protein from Bacillus subtilis (Bacteriophage SP01).